The chain runs to 264 residues: Thymidylate synthase (264 aa).

A dUMP-binding site is contributed by R21. H51 lines the (6R)-5,10-methylene-5,6,7,8-tetrahydrofolate pocket. Residue 126–127 (RR) coordinates dUMP. C146 (nucleophile) is an active-site residue. DUMP-binding positions include 166–169 (RSAD), N177, and 207–209 (HLY). D169 is a binding site for (6R)-5,10-methylene-5,6,7,8-tetrahydrofolate. A263 contributes to the (6R)-5,10-methylene-5,6,7,8-tetrahydrofolate binding site.

This sequence belongs to the thymidylate synthase family. Bacterial-type ThyA subfamily. As to quaternary structure, homodimer.

The protein resides in the cytoplasm. It catalyses the reaction dUMP + (6R)-5,10-methylene-5,6,7,8-tetrahydrofolate = 7,8-dihydrofolate + dTMP. The protein operates within pyrimidine metabolism; dTTP biosynthesis. Functionally, catalyzes the reductive methylation of 2'-deoxyuridine-5'-monophosphate (dUMP) to 2'-deoxythymidine-5'-monophosphate (dTMP) while utilizing 5,10-methylenetetrahydrofolate (mTHF) as the methyl donor and reductant in the reaction, yielding dihydrofolate (DHF) as a by-product. This enzymatic reaction provides an intracellular de novo source of dTMP, an essential precursor for DNA biosynthesis. The sequence is that of Thymidylate synthase from Cupriavidus necator (strain ATCC 17699 / DSM 428 / KCTC 22496 / NCIMB 10442 / H16 / Stanier 337) (Ralstonia eutropha).